A 504-amino-acid chain; its full sequence is UDP-N-acetylmuramoylalanine--D-glutamate ligase (504 aa).

Residue 132 to 138 (GTNGKTT) participates in ATP binding. The span at 286–295 (DRDASDEPAP) shows a compositional bias: basic and acidic residues. Positions 286–305 (DRDASDEPAPKRRRKNEVAT) are disordered.

This sequence belongs to the MurCDEF family.

It localises to the cytoplasm. It carries out the reaction UDP-N-acetyl-alpha-D-muramoyl-L-alanine + D-glutamate + ATP = UDP-N-acetyl-alpha-D-muramoyl-L-alanyl-D-glutamate + ADP + phosphate + H(+). Its pathway is cell wall biogenesis; peptidoglycan biosynthesis. Cell wall formation. Catalyzes the addition of glutamate to the nucleotide precursor UDP-N-acetylmuramoyl-L-alanine (UMA). The sequence is that of UDP-N-acetylmuramoylalanine--D-glutamate ligase from Paraburkholderia xenovorans (strain LB400).